Reading from the N-terminus, the 183-residue chain is MATGPRYKVPMRRRREVRTDYHQRLRLLKSGKPRLVARKSNKHVTAQLVTTGPDGDETVASAHSSDLDAYGWAAPTGNLPAAYLTGLLAGQRAVDAGVEEAVLDIGLNTATPGSKVFAIQEGAIDAGLDVPHNDSVLADWSRTRGEHIAEYAESLDEPLYSGDFDATALPAHFDETREAIMED.

It belongs to the universal ribosomal protein uL18 family. As to quaternary structure, part of the 50S ribosomal subunit. Contacts the 5S and 23S rRNAs.

In terms of biological role, this is one of the proteins that bind and probably mediate the attachment of the 5S RNA into the large ribosomal subunit, where it forms part of the central protuberance. The protein is Large ribosomal subunit protein uL18 of Halobacterium salinarum (strain ATCC 29341 / DSM 671 / R1).